The sequence spans 236 residues: Phosphoribosylaminoimidazole-succinocarboxamide synthase (236 aa).

This sequence belongs to the SAICAR synthetase family.

The catalysed reaction is 5-amino-1-(5-phospho-D-ribosyl)imidazole-4-carboxylate + L-aspartate + ATP = (2S)-2-[5-amino-1-(5-phospho-beta-D-ribosyl)imidazole-4-carboxamido]succinate + ADP + phosphate + 2 H(+). It participates in purine metabolism; IMP biosynthesis via de novo pathway; 5-amino-1-(5-phospho-D-ribosyl)imidazole-4-carboxamide from 5-amino-1-(5-phospho-D-ribosyl)imidazole-4-carboxylate: step 1/2. The sequence is that of Phosphoribosylaminoimidazole-succinocarboxamide synthase from Campylobacter jejuni subsp. jejuni serotype O:6 (strain 81116 / NCTC 11828).